A 43-amino-acid chain; its full sequence is Bacteriocin weissellin-A (43 aa).

An intrachain disulfide couples Cys9 to Cys14.

It is found in the secreted. Highly active against Gram-positive bacteria M.flavus strain ATCC 400, M.luteus strain CECT241, C.soprogenes strain NCTC533, L.monocytogenes strain ATCC 19111, L.inocua strain ATCC BAA-680D and S.carnosus strain LMG13564. Less active against B.cereus strain LMG13569, C.thiaminolyticum strain ATCC 15579, E.faecalis strain NCTC8176, L.lactis strain LM0230, L.casei strain ATCC 344, L.lactis strain IL1403, L.jensenii strain ATCC 25258, L.plantarum strain CECT220, L.brevis strain ATCC 8287, L.bulgaricus strain LMG13551, P.acidilactici strain ATCC 25740, P.pentosaceus strain ATCC 33316 and P.pentosaceus strain LMG13560. Weakly active against L.mesenteroides strain ATCC 19254, L.lactis strain ATCC 1454, L.sakei strain CECT906T, L.lactis subsp. cremoris strain MC1363 and L.curvatus strain ATCC 51436. Not active against Gram-negative bacterium S.enteritidis strain ATCC 13076. The mode of action appears to be non-lytic. Inactivated by proteinase K, but insensitive to trypsin, alpha-chymotrypsin, pepsin and papain. In Weissella paramesenteroides (Leuconostoc paramesenteroides), this protein is Bacteriocin weissellin-A.